We begin with the raw amino-acid sequence, 221 residues long: Deoxyribose-phosphate aldolase (221 aa).

Catalysis depends on Asp-89, which acts as the Proton donor/acceptor. The active-site Schiff-base intermediate with acetaldehyde is the Lys-151. The active-site Proton donor/acceptor is the Lys-180.

Belongs to the DeoC/FbaB aldolase family. DeoC type 1 subfamily.

The protein localises to the cytoplasm. The enzyme catalyses 2-deoxy-D-ribose 5-phosphate = D-glyceraldehyde 3-phosphate + acetaldehyde. It functions in the pathway carbohydrate degradation; 2-deoxy-D-ribose 1-phosphate degradation; D-glyceraldehyde 3-phosphate and acetaldehyde from 2-deoxy-alpha-D-ribose 1-phosphate: step 2/2. In terms of biological role, catalyzes a reversible aldol reaction between acetaldehyde and D-glyceraldehyde 3-phosphate to generate 2-deoxy-D-ribose 5-phosphate. In Mesomycoplasma hyopneumoniae (strain 232) (Mycoplasma hyopneumoniae), this protein is Deoxyribose-phosphate aldolase.